We begin with the raw amino-acid sequence, 221 residues long: MSQQIDPQQIDPELKSGQIKVLLEQYKILKNEIHLTSQKMTGNIRIGLIVLSLIGSYILHSLIKNEITKSVIDNTTDAVMYTISILLIIGLWTNVFSSLSAIARLGGYLIYLEKTINELIGKNLMIYESEFVPKFFTGSAILAYDLPNVLVFGCTSLFVISFLGYKVLVTINTPDFNLILRSFIILILVISTILFLVNLFTILRVNKVKDEIVTFCTKKIK.

The next 4 membrane-spanning stretches (helical) occupy residues 41–63, 78–100, 141–163, and 178–200; these read TGNIRIGLIVLSLIGSYILHSLI, AVMYTISILLIIGLWTNVFSSLS, ILAYDLPNVLVFGCTSLFVISFL, and LILRSFIILILVISTILFLVNLF.

The protein localises to the cell membrane. This is an uncharacterized protein from Archaeoglobus fulgidus (strain ATCC 49558 / DSM 4304 / JCM 9628 / NBRC 100126 / VC-16).